Consider the following 152-residue polypeptide: Large ribosomal subunit protein uL22 (152 aa).

Residues 124 to 145 (APKKAAAKKAAPAKETTPAATE) show a composition bias toward low complexity. A disordered region spans residues 124–152 (APKKAAAKKAAPAKETTPAATESKTEGAE).

This sequence belongs to the universal ribosomal protein uL22 family. As to quaternary structure, part of the 50S ribosomal subunit.

Its function is as follows. This protein binds specifically to 23S rRNA; its binding is stimulated by other ribosomal proteins, e.g. L4, L17, and L20. It is important during the early stages of 50S assembly. It makes multiple contacts with different domains of the 23S rRNA in the assembled 50S subunit and ribosome. The globular domain of the protein is located near the polypeptide exit tunnel on the outside of the subunit, while an extended beta-hairpin is found that lines the wall of the exit tunnel in the center of the 70S ribosome. The sequence is that of Large ribosomal subunit protein uL22 from Salinispora tropica (strain ATCC BAA-916 / DSM 44818 / JCM 13857 / NBRC 105044 / CNB-440).